Here is a 226-residue protein sequence, read N- to C-terminus: Leucyl/phenylalanyl-tRNA--protein transferase (226 aa).

This sequence belongs to the L/F-transferase family.

Its subcellular location is the cytoplasm. The catalysed reaction is N-terminal L-lysyl-[protein] + L-leucyl-tRNA(Leu) = N-terminal L-leucyl-L-lysyl-[protein] + tRNA(Leu) + H(+). It catalyses the reaction N-terminal L-arginyl-[protein] + L-leucyl-tRNA(Leu) = N-terminal L-leucyl-L-arginyl-[protein] + tRNA(Leu) + H(+). It carries out the reaction L-phenylalanyl-tRNA(Phe) + an N-terminal L-alpha-aminoacyl-[protein] = an N-terminal L-phenylalanyl-L-alpha-aminoacyl-[protein] + tRNA(Phe). In terms of biological role, functions in the N-end rule pathway of protein degradation where it conjugates Leu, Phe and, less efficiently, Met from aminoacyl-tRNAs to the N-termini of proteins containing an N-terminal arginine or lysine. This chain is Leucyl/phenylalanyl-tRNA--protein transferase, found in Bradyrhizobium sp. (strain ORS 278).